The sequence spans 427 residues: Large ribosomal subunit protein uL4 (427 aa).

An N-acetylalanine modification is found at A2. Residue K14 is modified to N6-acetyllysine. Omega-N-methylarginine is present on R97. K106 carries the post-translational modification N6-acetyllysine. K239 participates in a covalent cross-link: Glycyl lysine isopeptide (Lys-Gly) (interchain with G-Cter in SUMO2). K259 bears the N6-acetyllysine mark. T266 carries the post-translational modification Phosphothreonine. Phosphoserine occurs at positions 290 and 295. Position 300 is a citrulline (R300). K327 participates in a covalent cross-link: Glycyl lysine isopeptide (Lys-Gly) (interchain with G-Cter in SUMO2). N6-acetyllysine occurs at positions 333 and 353. K364 is modified (N6-acetyllysine; alternate). K364 is covalently cross-linked (Glycyl lysine isopeptide (Lys-Gly) (interchain with G-Cter in SUMO1); alternate). Position 365 is a phosphoserine (S365). Positions 369–427 (AAVAGKKPVVGKKGKKVAVGVKKQKKPLVGKKAAATKKPAPEKKSTEKKPTTEEKKPAA) are disordered. Positions 377 to 397 (VVGKKGKKVAVGVKKQKKPLV) are enriched in basic residues. The span at 407–427 (PAPEKKSTEKKPTTEEKKPAA) shows a compositional bias: basic and acidic residues.

It belongs to the universal ribosomal protein uL4 family. As to quaternary structure, component of the large ribosomal subunit. May bind IPO9 with low affinity. Interacts with RBM3. Citrullinated by PADI4.

It is found in the cytoplasm. Functionally, component of the large ribosomal subunit. The ribosome is a large ribonucleoprotein complex responsible for the synthesis of proteins in the cell. This Macaca fascicularis (Crab-eating macaque) protein is Large ribosomal subunit protein uL4 (RPL4).